The chain runs to 179 residues: Large ribosomal subunit protein uL6 (179 aa).

It belongs to the universal ribosomal protein uL6 family. Part of the 50S ribosomal subunit.

This protein binds to the 23S rRNA, and is important in its secondary structure. It is located near the subunit interface in the base of the L7/L12 stalk, and near the tRNA binding site of the peptidyltransferase center. The chain is Large ribosomal subunit protein uL6 from Mycolicibacterium gilvum (strain PYR-GCK) (Mycobacterium gilvum (strain PYR-GCK)).